The primary structure comprises 191 residues: MVPMNNWRAVPKLTQCVRTLLQGGVIAYPTEAVWGLGCDPDNDHAVEKILRLKKRPVHKGLILVAASIEQLDFLLHDLEPEYYQKLEASWPGANTWLIPHKGRVSPMVTGKHATVAVRVSNHPIVKALCEGFGGPIVSTSANPMGLSAAKSQMQVRRYFAKEALSYATGVVGGRSTPSVIRDLYTDAIIRA.

In terms of domain architecture, YrdC-like spans 10-191 (VPKLTQCVRT…DLYTDAIIRA (182 aa)).

The protein belongs to the SUA5 family. TsaC subfamily.

The protein localises to the cytoplasm. The enzyme catalyses L-threonine + hydrogencarbonate + ATP = L-threonylcarbamoyladenylate + diphosphate + H2O. In terms of biological role, required for the formation of a threonylcarbamoyl group on adenosine at position 37 (t(6)A37) in tRNAs that read codons beginning with adenine. Catalyzes the conversion of L-threonine, HCO(3)(-)/CO(2) and ATP to give threonylcarbamoyl-AMP (TC-AMP) as the acyladenylate intermediate, with the release of diphosphate. The protein is Threonylcarbamoyl-AMP synthase of Saccharophagus degradans (strain 2-40 / ATCC 43961 / DSM 17024).